We begin with the raw amino-acid sequence, 66 residues long: Large ribosomal subunit protein bL35 (66 aa).

The disordered stretch occupies residues Gly20–Ser40. The span at Ala28–Ser40 shows a compositional bias: basic residues.

It belongs to the bacterial ribosomal protein bL35 family.

The chain is Large ribosomal subunit protein bL35 from Ehrlichia chaffeensis (strain ATCC CRL-10679 / Arkansas).